A 289-amino-acid chain; its full sequence is Complement C1q tumor necrosis factor-related protein 7 (289 aa).

The N-terminal stretch at 1–16 (MIVLLYVTSLAICASG) is a signal peptide. The tract at residues 36–134 (IPGLPGPPGP…GDRGDQGDPG (99 aa)) is disordered. The 102-residue stretch at 38–139 (GLPGPPGPPG…QGDPGLPGVC (102 aa)) folds into the Collagen-like domain. The span at 48–61 (ANGSPGPHGRIGLP) shows a compositional bias: low complexity. The segment covering 63–76 (RDGRDGRKGEKGEK) has biased composition (basic and acidic residues). The segment covering 78 to 91 (TAGLKGKTGPLGLA) has biased composition (low complexity). Residues 93–102 (EKGDQGETGK) show a composition bias toward basic and acidic residues. A C1q domain is found at 143–279 (SIVLKSAFSV…GFLLYVDTDY (137 aa)).

Its subcellular location is the secreted. The protein is Complement C1q tumor necrosis factor-related protein 7 (C1qtnf7) of Mus musculus (Mouse).